Here is an 858-residue protein sequence, read N- to C-terminus: DNA mismatch repair protein MutS (858 aa).

Position 609 to 616 (609 to 616 (GPNMSGKS)) interacts with ATP.

Belongs to the DNA mismatch repair MutS family.

Functionally, this protein is involved in the repair of mismatches in DNA. It is possible that it carries out the mismatch recognition step. This protein has a weak ATPase activity. This is DNA mismatch repair protein MutS from Enterococcus faecalis (strain ATCC 700802 / V583).